The following is an 88-amino-acid chain: Small ribosomal subunit protein bS20 (88 aa).

Positions 1-20 (MANTAQARKRARQAVVQNAH) are disordered.

It belongs to the bacterial ribosomal protein bS20 family.

Binds directly to 16S ribosomal RNA. The polypeptide is Small ribosomal subunit protein bS20 (Ralstonia nicotianae (strain ATCC BAA-1114 / GMI1000) (Ralstonia solanacearum)).